A 365-amino-acid chain; its full sequence is Parathion hydrolase (365 aa).

The tat-type signal signal peptide spans Met1–Gly29. Positions 55, 57, 169, 201, 230, and 301 each coordinate Zn(2+). Position 169 is an N6-carboxylysine (Lys169).

It belongs to the metallo-dependent hydrolases superfamily. Phosphotriesterase family. In terms of assembly, homodimer. Requires Zn(2+) as cofactor. In terms of processing, predicted to be exported by the Tat system. The position of the signal peptide cleavage has been experimentally proven.

The protein resides in the cell membrane. The enzyme catalyses An aryl dialkyl phosphate + H2O = dialkyl phosphate + an aryl alcohol.. In terms of biological role, has an unusual substrate specificity for synthetic organophosphate triesters and phosphorofluoridates. All of the phosphate triesters found to be substrates are synthetic compounds. The identity of any naturally occurring substrate for the enzyme is unknown. Has no detectable activity with phosphate monoesters or diesters and no activity as an esterase or protease. It catalyzes the hydrolysis of the insecticide paraoxon at a rate approaching the diffusion limit and thus appears to be optimally evolved for utilizing this synthetic substrate. The polypeptide is Parathion hydrolase (opd) (Brevundimonas diminuta (Pseudomonas diminuta)).